We begin with the raw amino-acid sequence, 354 residues long: MYGNNNPGSNNNNGGYPPYGYNKSSGGRGFGMSHSLPSGMSRYAFSPQDTEFSFPSSSSRRGYNEFPGGGGIGIGANGGSANNLGGNMCNLLPMTSNNSLSNLCGLSLGSGGSDDHMMMHDQRSSNTNLIVNYLPQDMTDRELYALFRAIGPINTCRIMRDYKTGYSFGYAFVDFTSEMDSQRAIKVLNGITVRNKRLKVSYARPGGESIKDTNLYVTNLPRTITDDQLDTIFGKYGSIVQKNILRDKLTGRPRGVAFVRYNKREEAQEAISALNNVIPEGGSQPLSVRLAQEHGKAKAAHFMSQIGVPSANAPPPPPPPPHMAFNNMVHRGRSIKSQQRFQKTHPYFDAQKFI.

The disordered stretch occupies residues M1–G20. RRM domains follow at residues T127 to P205 and T213 to E293.

As to quaternary structure, part of a complex containing fl(2)d, Sxl and vir. Interacts with nito. Interacts with Unr; cooperates with Sxl to prevent translation of msl-2 transcripts. Interacts with how; promoting nuclear retention of msl-2 transcripts. In terms of tissue distribution, the embryo-specific isoform is not expressed in the pole cells, which are the progenitors of the germline.

It localises to the nucleus. The protein resides in the cytoplasm. Its function is as follows. Sex determination switch protein, which controls sexual development and dosage compensation in females. Sxl protein is only active in females: it is inactive in males throughout development. Acts as a mRNA-binding protein, which specifically binds to a subset of pre-mRNAs and mRNAs and regulates their processing and/or translation. Promotes sexual development by controlling the female-specific alternative splicing of the transformer (tra) pre-mRNA: binds tightly to a characteristic uridine-rich polypyrimidine tract at the non-sex specific 3' splice site in one of the tra introns, preventing the general splicing factor U2AF from binding to this site and forcing it to bind to the female-specific 3' splice site. Acts as an inhibitor of dosage compensation in females by preventing production of msl-2 protein, an essential component of the MSL complex, the complex that mediates X-chromosome dosage compensation. Specifially binds to uridine stretches in both the 5'- and 3'-UTR of msl-2 transcripts. Sxl first acts at the splicing level by promoting retention of an intron in the 5' UTR of msl-2 pre-mRNA. The retained intron contains Sxl-binding sites that are required for subsequent steps of repression: after msl-2 mRNA export into the cytoplasm, Sxl coordinates its translational repression by targeting early steps of translation initiation. Together with how, Sxl also prevents production of msl-2 protein by preventing nuclear export of msl-2 transcripts. This chain is Protein sex-lethal, found in Drosophila subobscura (Fruit fly).